Reading from the N-terminus, the 609-residue chain is Albumin (609 aa).

A signal peptide spans 1-18 (MKWVTFISLLFLFSSAYS). A propeptide spanning residues 19 to 24 (RGVFRR) is cleaved from the precursor. Albumin domains are found at residues 19-210 (RGVF…DELR), 211-403 (DEGK…EFKP), and 404-601 (LVEE…KLVA). Residue H27 coordinates Cu cation. S29 carries the post-translational modification Phosphoserine; by FAM20C. E30 contributes to the Ca(2+) binding site. Residue K36 is glycosylated (N-linked (Glc) (glycation) lysine). Residue D37 coordinates Ca(2+). K75 carries N-linked (Glc) (glycation) lysine; in vitro glycosylation. C77 and C86 are joined by a disulfide. A phosphoserine; by FAM20C mark is found at S82 and S89. H91 contributes to the Zn(2+) binding site. 4 disulfide bridges follow: C99-C115, C114-C125, C148-C193, and C192-C201. Residue T107 is modified to Phosphothreonine; by FAM20C. 2 N-linked (Glc) (glycation) lysine; in vitro glycosylation sites follow: K161 and K186. K223 carries N-linked (Glc) (glycation) lysine; in vitro glycosylation. 2 cysteine pairs are disulfide-bonded: C224/C270 and C269/C277. An N6-succinyllysine modification is found at K229. The N-linked (Glc) (glycation) lysine; in vitro glycan is linked to K249. Residue K257 is glycosylated (N-linked (Glc) (glycation) lysine). K264 is a (4Z,15Z)-bilirubin IXalpha binding site. Ca(2+) is bound at residue E268. The Zn(2+) site is built by H271 and D273. 4 residues coordinate Ca(2+): D273, E276, D279, and D283. 2 disulfide bridges follow: C289–C303 and C302–C313. Residue S297 is modified to Phosphoserine. K300 is a glycosylation site (N-linked (Glc) (glycation) lysine; in vitro). K305 carries N-linked (Glc) (glycation) lysine glycosylation. K337 carries an N-linked (Glc) (glycation) lysine; in vitro glycan. 2 disulfides stabilise this stretch: C340–C385 and C384–C393. A glycan (N-linked (Glc) (glycation) lysine) is linked at K341. A glycan (N-linked (GlcNAc...) asparagine; in variant Redhill) is linked at N342. N-linked (Glc) (glycation) lysine; in vitro glycosylation occurs at K347. N-linked (Glc) (glycation) lysine glycosylation is present at K375. Residues K402 and K437 are each glycosylated (N-linked (Glc) (glycation) lysine; in vitro). Cystine bridges form between C416/C462, C461/C472, C485/C501, and C500/C511. Position 443 is a phosphoserine (S443). Residues T444 and T446 each carry the phosphothreonine modification. Position 460 is an N6-succinyllysine (K460). K463 carries an N-linked (Glc) (glycation) lysine glycan. N-linked (Glc) (glycation) lysine; in vitro glycosylation is present at K468. Position 513 is a phosphoserine (S513). D518 is a glycosylation site (N-linked (GlcNAc...) asparagine; in variant Casebrook). 2 disulfide bridges follow: C538-C583 and C582-C591. The residue at position 543 (K543) is an N6-succinyllysine. N-linked (Glc) (glycation) lysine glycosylation occurs at K549. Residue K558 is modified to N6-methyllysine; alternate. K558 is a glycosylation site (N-linked (Glc) (glycation) lysine; alternate). N-linked (Glc) (glycation) lysine; in vitro glycosylation is found at K560 and K569. K588 carries the N6-succinyllysine modification. N-linked (Glc) (glycation) lysine; in vitro glycosylation is present at K597.

This sequence belongs to the ALB/AFP/VDB family. Interacts with FCGRT; this interaction regulates ALB homeostasis. Interacts with TASOR. In plasma, occurs in a covalently-linked complex with chromophore-bound alpha-1-microglobulin with molar ratio 1:2 and 1:1; this interaction does not prevent fatty acid binding to ALB. In terms of processing, kenitra variant is partially O-glycosylated at Thr-620. It has two new disulfide bonds Cys-600 to Cys-602 and Cys-601 to Cys-606. Post-translationally, glycated in diabetic patients. Phosphorylated by FAM20C in the extracellular medium. In terms of processing, acetylated on Lys-223 by acetylsalicylic acid. As to expression, plasma.

Its subcellular location is the secreted. Binds water, Ca(2+), Na(+), K(+), fatty acids, hormones, bilirubin and drugs. Its main function is the regulation of the colloidal osmotic pressure of blood. Major zinc transporter in plasma, typically binds about 80% of all plasma zinc. Major calcium and magnesium transporter in plasma, binds approximately 45% of circulating calcium and magnesium in plasma. Potentially has more than two calcium-binding sites and might additionally bind calcium in a non-specific manner. The shared binding site between zinc and calcium at residue Asp-273 suggests a crosstalk between zinc and calcium transport in the blood. The rank order of affinity is zinc &gt; calcium &gt; magnesium. Binds to the bacterial siderophore enterobactin and inhibits enterobactin-mediated iron uptake of E.coli from ferric transferrin, and may thereby limit the utilization of iron and growth of enteric bacteria such as E.coli. Does not prevent iron uptake by the bacterial siderophore aerobactin. This chain is Albumin (ALB), found in Homo sapiens (Human).